Here is a 390-residue protein sequence, read N- to C-terminus: Elongation factor Ts, mitochondrial (390 aa).

Belongs to the EF-Ts family.

It is found in the mitochondrion. Associates with the EF-Tu.GDP complex and induces the exchange of GDP to GTP. It remains bound to the aminoacyl-tRNA.EF-Tu.GTP complex up to the GTP hydrolysis stage on the ribosome. This chain is Elongation factor Ts, mitochondrial, found in Plasmodium falciparum (isolate 3D7).